A 105-amino-acid chain; its full sequence is Replication restart protein PriB (105 aa).

Residues 1 to 102 (MTANRLTLSG…LHAEQIELID (102 aa)) form the SSB domain.

This sequence belongs to the PriB family. Homodimer. Interacts with PriA and DnaT. Component of the replication restart primosome. Primosome assembly occurs via a 'hand-off' mechanism. PriA binds to replication forks, subsequently PriB then DnaT bind; DnaT then displaces ssDNA to generate the helicase loading substrate.

Involved in the restart of stalled replication forks, which reloads the replicative helicase on sites other than the origin of replication; the PriA-PriB pathway is the major replication restart pathway. During primosome assembly it facilitates complex formation between PriA and DnaT on DNA; stabilizes PriA on DNA. Stimulates the DNA unwinding activity of PriA helicase. This chain is Replication restart protein PriB, found in Erwinia tasmaniensis (strain DSM 17950 / CFBP 7177 / CIP 109463 / NCPPB 4357 / Et1/99).